The sequence spans 355 residues: Chorismate synthase (355 aa).

Positions 44 and 49 each coordinate NADP(+). FMN is bound by residues 121-123 (HFS), Gly-277, 292-296 (KPTPS), and Arg-319.

The protein belongs to the chorismate synthase family. FMNH2 serves as cofactor.

The enzyme catalyses 5-O-(1-carboxyvinyl)-3-phosphoshikimate = chorismate + phosphate. It functions in the pathway metabolic intermediate biosynthesis; chorismate biosynthesis; chorismate from D-erythrose 4-phosphate and phosphoenolpyruvate: step 7/7. In terms of biological role, catalyzes the anti-1,4-elimination of the C-3 phosphate and the C-6 proR hydrogen from 5-enolpyruvylshikimate-3-phosphate (EPSP) to yield chorismate, which is the branch point compound that serves as the starting substrate for the three terminal pathways of aromatic amino acid biosynthesis. This reaction introduces a second double bond into the aromatic ring system. The polypeptide is Chorismate synthase (Thermococcus kodakarensis (strain ATCC BAA-918 / JCM 12380 / KOD1) (Pyrococcus kodakaraensis (strain KOD1))).